Consider the following 455-residue polypeptide: Bifunctional protein GlmU (455 aa).

Positions 1–232 (MASTTGALIL…DPNLLGVNNP (232 aa)) are pyrophosphorylase. UDP-N-acetyl-alpha-D-glucosamine-binding positions include 10-13 (LAAG), lysine 24, glutamine 75, and 80-81 (GT). Residue aspartate 106 participates in Mg(2+) binding. 4 residues coordinate UDP-N-acetyl-alpha-D-glucosamine: glycine 141, glutamate 155, asparagine 172, and asparagine 230. Residue asparagine 230 participates in Mg(2+) binding. Residues 233 to 253 (AELIRSEALLRTRLVIGHIEG) form a linker region. An N-acetyltransferase region spans residues 254 to 455 (GVLIHAPETV…QTNLPRKPKA (202 aa)). UDP-N-acetyl-alpha-D-glucosamine-binding residues include arginine 336 and lysine 354. Histidine 366 (proton acceptor) is an active-site residue. UDP-N-acetyl-alpha-D-glucosamine contacts are provided by tyrosine 369 and asparagine 380. Acetyl-CoA is bound by residues alanine 383, 389 to 390 (NY), serine 408, alanine 426, and arginine 443.

It in the N-terminal section; belongs to the N-acetylglucosamine-1-phosphate uridyltransferase family. In the C-terminal section; belongs to the transferase hexapeptide repeat family. As to quaternary structure, homotrimer. Mg(2+) is required as a cofactor.

It localises to the cytoplasm. It catalyses the reaction alpha-D-glucosamine 1-phosphate + acetyl-CoA = N-acetyl-alpha-D-glucosamine 1-phosphate + CoA + H(+). It carries out the reaction N-acetyl-alpha-D-glucosamine 1-phosphate + UTP + H(+) = UDP-N-acetyl-alpha-D-glucosamine + diphosphate. It functions in the pathway nucleotide-sugar biosynthesis; UDP-N-acetyl-alpha-D-glucosamine biosynthesis; N-acetyl-alpha-D-glucosamine 1-phosphate from alpha-D-glucosamine 6-phosphate (route II): step 2/2. Its pathway is nucleotide-sugar biosynthesis; UDP-N-acetyl-alpha-D-glucosamine biosynthesis; UDP-N-acetyl-alpha-D-glucosamine from N-acetyl-alpha-D-glucosamine 1-phosphate: step 1/1. It participates in bacterial outer membrane biogenesis; LPS lipid A biosynthesis. Its function is as follows. Catalyzes the last two sequential reactions in the de novo biosynthetic pathway for UDP-N-acetylglucosamine (UDP-GlcNAc). The C-terminal domain catalyzes the transfer of acetyl group from acetyl coenzyme A to glucosamine-1-phosphate (GlcN-1-P) to produce N-acetylglucosamine-1-phosphate (GlcNAc-1-P), which is converted into UDP-GlcNAc by the transfer of uridine 5-monophosphate (from uridine 5-triphosphate), a reaction catalyzed by the N-terminal domain. The chain is Bifunctional protein GlmU from Nitratidesulfovibrio vulgaris (strain DP4) (Desulfovibrio vulgaris).